The sequence spans 610 residues: Zinc finger protein 823 (610 aa).

The 94-residue stretch at 4-97 (VAFEDVAVNF…VNKNTPRVNP (94 aa)) folds into the KRAB domain. 10 consecutive C2H2-type zinc fingers follow at residues 164 to 186 (FDCKECAKTFSSLGNLRRHMAAH), 192 to 214 (YKCKLCGKAFVWPSLFHLHERTH), 220 to 242 (YECKQCSKAFPFYSSYLRHERIH), 248 to 270 (YECKQCSKAFPDYSTYLRHERTH), 276 to 298 (YKCTQCGKAFSCYYYTRLHERTH), 304 to 326 (YACKQCGKTFYHHTSFRRHMIRH), 332 to 354 (HKCKICGKGFDCPSSVRNHETTH), 360 to 382 (YECKQCGKVLSHSSSFRSHMITH), 388 to 410 (QKCKICGKAFGCPSLFQRHERTH), and 416 to 438 (YQCKQCGKAFSLAGSLRRHEATH). The C2H2-type 11; atypical zinc-finger motif lies at 444–465 (YKCQCGKAFSDLSSFQNHETTH). 5 C2H2-type zinc fingers span residues 471–493 (YECKECGKAFSCFKYLSQHKRTH), 499–521 (YECKTCRKAFSHFSNLKVHERIH), 527–549 (YECKECGKAFSWLTCLLRHERIH), 555–577 (YECLQCGKAFTRSRFLRGHEKTH), and 583–605 (YECKECGKALSSLRSLHRHKRTH).

The protein belongs to the krueppel C2H2-type zinc-finger protein family.

It localises to the nucleus. May be involved in transcriptional regulation. The polypeptide is Zinc finger protein 823 (ZNF823) (Homo sapiens (Human)).